The sequence spans 382 residues: B3 domain-containing protein Os03g0622100 (382 aa).

Residues 29–123 (CKHFLTYMVG…SFDVLIFDPS (95 aa)) constitute a DNA-binding region (TF-B3 1). 2 stretches are compositionally biased toward basic and acidic residues: residues 136–158 (RGFGREEKSAGAEGGGRDGDKNG) and 193–202 (QDHREEKKEG). The interval 136–222 (RGFGREEKSA…EDVDKDGEDR (87 aa)) is disordered. The span at 203 to 218 (DDEDEDEDEDEDVDKD) shows a compositional bias: acidic residues. The segment at residues 261-363 (KVIHASHLLS…AGDRLRRRPR (103 aa)) is a DNA-binding region (TF-B3 2).

It is found in the nucleus. This chain is B3 domain-containing protein Os03g0622100, found in Oryza sativa subsp. japonica (Rice).